The primary structure comprises 505 residues: MKNEKKKSGIEPKVFFPPLIIVGILCWLTVRDLDAANVVINAVFSYVTNVWGWAFEWYMIVMLFGWFWLVFGPYAKKRLGDEKPEFSTASWIFMMFASCTSAAVLFWGSIEIYYYISTPPFGLEPNSTGAKEIGLAYSLFHWGPLPWATYSFLSVAFAYFFFVRKMDVIRPSSTLVPLVGEKHAKGLFGTIVDNFYLVALIFAMGTSLGLATPLVTECMQWLFGIPHTLQLDAIIITCWIILNAICVACGLQKGVRIASDMRSYLSFLMLGWVFIVSGASFIMNYFTDSVGMLLMHLPRMLFYTDAIGKGGFPQGWTVFYWAWWVIYAIQMSIFLARISRGRTVRELCFGMVMGLTASTWILWTVLGSNTLLLMDKNILNIPQLIEQHGVARAIIETWAALPLSTATMWGFFILCFIATVTLINACSYTLAMSTCREVRDGEEPPLLVRIGWSVLVGIIGIVLLALGGLKPIQTAIIAGGCPLFFVNIMVTLSFIKDAKVHWKDK.

12 helical membrane passes run 10 to 30 (IEPK…WLTV), 51 to 71 (WGWA…WLVF), 92 to 112 (IFMM…SIEI), 143 to 163 (GPLP…FFFV), 195 to 215 (FYLV…TPLV), 231 to 251 (LDAI…ACGL), 263 to 283 (SYLS…SFIM), 316 to 336 (WTVF…IFLA), 347 to 367 (LCFG…TVLG), 403 to 423 (LSTA…VTLI), 446 to 466 (LLVR…LLAL), and 475 to 495 (AIIA…LSFI).

This sequence belongs to the BCCT transporter (TC 2.A.15) family. CaiT subfamily. As to quaternary structure, homotrimer.

It localises to the cell inner membrane. It catalyses the reaction 4-(trimethylamino)butanoate(in) + (R)-carnitine(out) = 4-(trimethylamino)butanoate(out) + (R)-carnitine(in). Its pathway is amine and polyamine metabolism; carnitine metabolism. Functionally, catalyzes the exchange of L-carnitine for gamma-butyrobetaine. The chain is L-carnitine/gamma-butyrobetaine antiporter from Salmonella paratyphi A (strain ATCC 9150 / SARB42).